Consider the following 289-residue polypeptide: Ribosomal protein L11 methyltransferase (289 aa).

S-adenosyl-L-methionine is bound by residues Thr-142, Gly-163, Asp-185, and Asn-226.

The protein belongs to the methyltransferase superfamily. PrmA family.

It localises to the cytoplasm. It catalyses the reaction L-lysyl-[protein] + 3 S-adenosyl-L-methionine = N(6),N(6),N(6)-trimethyl-L-lysyl-[protein] + 3 S-adenosyl-L-homocysteine + 3 H(+). Its function is as follows. Methylates ribosomal protein L11. The chain is Ribosomal protein L11 methyltransferase from Legionella pneumophila subsp. pneumophila (strain Philadelphia 1 / ATCC 33152 / DSM 7513).